The sequence spans 189 residues: Cell division protein SepF (189 aa).

Disordered stretches follow at residues 1–75 (MEGQ…GLPG) and 155–174 (STPSSQGMPPLQRPLQSPTP).

The protein belongs to the SepF family. As to quaternary structure, homodimer. Interacts with FtsZ.

It localises to the cytoplasm. In terms of biological role, cell division protein that is part of the divisome complex and is recruited early to the Z-ring. Probably stimulates Z-ring formation, perhaps through the cross-linking of FtsZ protofilaments. Its function overlaps with FtsA. The sequence is that of Cell division protein SepF from Synechococcus sp. (strain JA-3-3Ab) (Cyanobacteria bacterium Yellowstone A-Prime).